A 42-amino-acid polypeptide reads, in one-letter code: Large ribosomal subunit protein bL34c (42 aa).

Belongs to the bacterial ribosomal protein bL34 family.

It localises to the plastid. Its subcellular location is the chloroplast. This Olisthodiscus luteus (Marine phytoflagellate) protein is Large ribosomal subunit protein bL34c (rpl34).